The chain runs to 202 residues: MTYELPKLPYTYDALEPNFDKETMELHYTKHHNTYVTKLNEAVSGHPELAEKPVEELVANLDSVPEDIRGAVRNHGGGHANHTLFWSILSPNGGGAPTGDLKSAIESEFGTFDDFKEKFNAAAAARFGSGWAWLVVNNGKLEIVSTANQDSPLSDGKTPVLGLDVWEHAYYLKFQNRRPEYIDTFWNVVNWDEANKRFDAAK.

Mn(2+) contacts are provided by His-27, His-82, Asp-164, and His-168.

It belongs to the iron/manganese superoxide dismutase family. In terms of assembly, homodimer. Mn(2+) is required as a cofactor.

The enzyme catalyses 2 superoxide + 2 H(+) = H2O2 + O2. Destroys superoxide anion radicals which are normally produced within the cells and which are toxic to biological systems. This chain is Superoxide dismutase [Mn] (sodA), found in Listeria innocua serovar 6a (strain ATCC BAA-680 / CLIP 11262).